Here is a 267-residue protein sequence, read N- to C-terminus: Diphthine--ammonia ligase (267 aa).

A Phosphotyrosine modification is found at Tyr-97.

It belongs to the Diphthine--ammonia ligase family.

It carries out the reaction diphthine-[translation elongation factor 2] + NH4(+) + ATP = diphthamide-[translation elongation factor 2] + AMP + diphosphate + H(+). It participates in protein modification; peptidyl-diphthamide biosynthesis. Amidase that may catalyze the last step of diphthamide biosynthesis using ammonium and ATP. Diphthamide biosynthesis consists in the conversion of an L-histidine residue in the translation elongation factor (EEF2) to diphthamide. The protein is Diphthine--ammonia ligase of Homo sapiens (Human).